The chain runs to 399 residues: Forkhead box protein A4-A (399 aa).

The segment at residues 119 to 213 (KPPYSYISLI…ENGCYLRRQK (95 aa)) is a DNA-binding region (fork-head). The segment covering 219–234 (RSKSGEGEKKVNKPGE) has biased composition (basic and acidic residues). The tract at residues 219-290 (RSKSGEGEKK…VGLSPTSEQA (72 aa)) is disordered. Residues 267 to 277 (STGSSIHQACG) are compositionally biased toward polar residues.

As to expression, during stages 8.5 to 10, expressed in the part of the dorsal mesoderm invaginating the dorsal blastopore lip (Spemann organizer), as a direct response to dorsal mesodermal induction. At stage 12 (mid-gastrulation), restricted to the dorsal midline in the deeper layers of mesodermal cells. Continuously present in the posterior portion of invaginated mesoderm and expressed within the notochord. Also present in the midline of the neural plate during gastrulation, but absent from the notoplate in exogastrula embryos. Expression in the notochord continues in neurula-stage embryos and at stage 20 in addition to the notochord, expression is seen in the pharyngeal endoderm.

The protein resides in the nucleus. In terms of biological role, transcriptional repressor involved in embryonic nervous system development. Plays a role in the induction and patterning of the anterior-posterior neural axis. Involved in the establishment of floor plate differentiation from neural plate cells during gastrulation. Binds the anf1 promoter sequence to restrict expression of anf1 to the anterior of the neural plate, thereby patterning the forebrain. Can bind to the HNF-3-alpha DNA target sequence. Cooperates with t/bra in a dose-dependent manner to specify dorsal mesoderm formation, including notochord. Binds to DNA via the target sequence 5'-[GA]TAAA[TC]A-3', with 5'-GTAAATA-3' being the preferred binding site. This chain is Forkhead box protein A4-A (foxa4-a), found in Xenopus laevis (African clawed frog).